Here is a 92-residue protein sequence, read N- to C-terminus: PPQIQVYTRHPPENGKPNILNCYVSQFHPPHIEIEILKNGKKIPEIEMSDLSFSKDWSFYILAHTEITPTESDTFACRVKHVSLNEPKTVIW.

Residues 2–91 (PQIQVYTRHP…VSLNEPKTVI (90 aa)) enclose the Ig-like C1-type domain. An intrachain disulfide couples cysteine 22 to cysteine 77.

It belongs to the beta-2-microglobulin family. Heterodimer of an alpha chain and a beta chain. Beta-2-microglobulin is the beta-chain of major histocompatibility complex class I molecules.

It is found in the secreted. In terms of biological role, component of the class I major histocompatibility complex (MHC). Involved in the presentation of peptide antigens to the immune system. The sequence is that of Beta-2-microglobulin (B2m) from Mus cervicolor (Fawn-colored mouse).